The following is a 1002-amino-acid chain: Mitogen-activated protein kinase kinase kinase 21 (1002 aa).

The interval 1–26 (MALPVAEGTADTPLSPARDDSGSTSS) is disordered. An SH3 domain is found at 24-88 (TSSGMWAALY…PASYVAPCGP (65 aa)). One can recognise a Protein kinase domain in the interval 110 to 390 (LELKELIGAG…QLTAIEEAVL (281 aa)). Residues 116-124 (IGAGGFGQV) and lysine 137 contribute to the ATP site. The active-site Proton acceptor is the aspartate 247. Threonine 283 is modified (phosphothreonine; by autocatalysis). The residue at position 287 (serine 287) is a Phosphoserine; by autocatalysis and MAP4K1. Leucine-zipper regions lie at residues 409-430 (IQQM…EEEL) and 444-466 (LRRR…LNVL). 6 disordered regions span residues 508–531 (TVQA…PPGS), 574–604 (GCTW…NSPW), 640–689 (HRKP…VGAP), 721–778 (AQAP…SHSS), 797–823 (LGNA…SGCE), and 878–899 (QSAP…RDLA). A phosphoserine mark is found at serine 512, serine 527, and serine 531. Threonine 576 carries the post-translational modification Phosphothreonine. Positions 584–596 (TKERPEGRERVRP) are enriched in basic and acidic residues. The residue at position 598 (serine 598) is a Phosphoserine. Residues 661–677 (DSQREDSSEAESREEGS) are compositionally biased toward basic and acidic residues. Low complexity-rich tracts occupy residues 740 to 758 (QPAS…QPSA) and 766 to 778 (STLL…SHSS).

The protein belongs to the protein kinase superfamily. STE Ser/Thr protein kinase family. MAP kinase kinase kinase subfamily. In terms of assembly, homodimer. Interacts with TLR4. Requires Mg(2+) as cofactor. Post-translationally, autophosphorylation on serine and threonine residues within the activation loop plays a role in enzyme activation.

The catalysed reaction is L-seryl-[protein] + ATP = O-phospho-L-seryl-[protein] + ADP + H(+). The enzyme catalyses L-threonyl-[protein] + ATP = O-phospho-L-threonyl-[protein] + ADP + H(+). Its activity is regulated as follows. Homodimerization via the leucine zipper domains is required for autophosphorylation and subsequent activation. Negative regulator of TLR4 signaling. Does not activate JNK1/MAPK8 pathway, p38/MAPK14, nor ERK2/MAPK1 pathways. The protein is Mitogen-activated protein kinase kinase kinase 21 (Map3k21) of Mus musculus (Mouse).